We begin with the raw amino-acid sequence, 440 residues long: MSEFSQTVPELVAWARKNDFSITLPTERLAFLMAIAALNGERLDGEMSEGELVDAFRHVSKGFEQTTETVTVRANNAINDMVRQRLLNRFTSELADGNAIYRLTPLGIGITDYYIRQREFSTLRLSMQLSIVAQELQRAAEAAEEGGDEFHWHRNVFAPLKYSVAEIFDSIDMTQRLMDEQQHSVKEDIAALLNQDWRAAIASCEMLLSETSGTLRELQDTLEAAGDKLQANLLRIQEATIGNAGLDLVDKLVFDLQSKLDRIISWGQQAIDLWIGYDRHVHKFIRTAIDMDKNRVFAQRLRQSVQHYFDNPWTLTHANADRLLDMRDEELALRSEEVTGELPPDLEFEEFNAIREQLTAMIEQALLVYQQQQIPLNLGEVMRDYLAQYPRARHFDVARILVDQAVRLGVAEADFSGLPAEWLAINDYGAKVQAHVINKY.

Residues 208–236 (LSETSGTLRELQDTLEAAGDKLQANLLRI) form a leucine-zipper region.

Belongs to the MukF family. As to quaternary structure, interacts, and probably forms a ternary complex, with MukE and MukB via its C-terminal region. The complex formation is stimulated by calcium or magnesium. It is required for an interaction between MukE and MukB.

It is found in the cytoplasm. The protein localises to the nucleoid. In terms of biological role, involved in chromosome condensation, segregation and cell cycle progression. May participate in facilitating chromosome segregation by condensation DNA from both sides of a centrally located replisome during cell division. Not required for mini-F plasmid partitioning. Probably acts via its interaction with MukB and MukE. Overexpression results in anucleate cells. It has a calcium binding activity. The protein is Chromosome partition protein MukF of Yersinia pestis.